A 657-amino-acid chain; its full sequence is Autophagy-related protein 22 (657 aa).

Over residues 1–15 the composition is skewed to low complexity; the sequence is MAPNLQPQPQSQLQR. The segment at 1–78 is disordered; sequence MAPNLQPQPQ…VVPRHFGHDA (78 aa). Over 1 to 91 the chain is Cytoplasmic; the sequence is MAPNLQPQPQ…SRRELLGWYA (91 aa). The span at 26–40 shows a compositional bias: polar residues; the sequence is GLSNISKRSFRSCAT. The chain crosses the membrane as a helical span at residues 92-112; sequence YAFAAETYVICGIASFIPILL. Residues 113–155 lie on the Vacuolar side of the membrane; it reads ETLARENGVLVSDRKTPCGSSDSKNDGDGQCIVWVFGMEINTA. Residues 156–176 traverse the membrane as a helical segment; sequence SFAMYTFSVSVLVQALLVVSI. Topologically, residues 177-187 are cytoplasmic; that stretch reads SCAADHGNYRK. The helical transmembrane segment at 188-208 threads the bilayer; the sequence is KLLLTFAWIGSFAVMSYIFIT. Over 209–212 the chain is Vacuolar; the sequence is KDNY. Residues 213–233 traverse the membrane as a helical segment; sequence ILGALLTVISNTSFGASFVLL. At 234 to 317 the chain is on the cytoplasmic side; it reads NSFLPLLVRY…ELELSTRISA (84 aa). The chain crosses the membrane as a helical span at residues 318–338; that stretch reads IGIGTGYIAALFLQCICIGVL. Residues 339 to 349 are Vacuolar-facing; sequence ISLHNTTWGQR. Asn343 is a glycosylation site (N-linked (GlcNAc...) asparagine). A helical transmembrane segment spans residues 350 to 370; sequence VVLFMVGVWWTVFTIPAAMWL. At 371 to 384 the chain is on the cytoplasmic side; the sequence is RPRPGPPLADNGRK. Residues 385-405 traverse the membrane as a helical segment; it reads GIMAGLAYILYAWKSLFKTIQ. The Vacuolar segment spans residues 406 to 409; that stretch reads QARR. A helical membrane pass occupies residues 410–430; that stretch reads LLDIVLFLAGWFLLSDAIATT. Residues 431–446 lie on the Cytoplasmic side of the membrane; it reads SSTAILFAKTQLHMKP. Residues 447–467 form a helical membrane-spanning segment; the sequence is WALGMINVISTTAGVFGAFGW. Topologically, residues 468–481 are vacuolar; sequence SWVSRLFNLKAHQT. Residues 482-502 form a helical membrane-spanning segment; it reads ILVCIALFELIPLYGLLGYLP. Topologically, residues 503 to 515 are cytoplasmic; that stretch reads FVKNWGVFGLQQP. Residues 516-536 form a helical membrane-spanning segment; the sequence is WEMYPLAAVYGVVLGGLSGYC. Topologically, residues 537-554 are vacuolar; the sequence is RSLYGELIPPGSEAAFYA. A helical membrane pass occupies residues 555-575; sequence LYAITDKGSSVFGPTIVGAII. Over 576–583 the chain is Cytoplasmic; sequence DRTGTIRP. Residues 584–604 traverse the membrane as a helical segment; that stretch reads AFWFLAVLVGFPAPLIWFIDV. Over 605–657 the chain is Vacuolar; sequence ERGRREGAKLAKSITDSIVQEEDESDDGAERRGMLSDYEREHGQSIDDERAGR. A disordered region spans residues 615 to 657; that stretch reads AKSITDSIVQEEDESDDGAERRGMLSDYEREHGQSIDDERAGR. Basic and acidic residues predominate over residues 632–657; the sequence is GAERRGMLSDYEREHGQSIDDERAGR.

The protein belongs to the ATG22 family.

It localises to the vacuole membrane. Functionally, vacuolar effluxer which mediate the efflux of leucine and other amino acids resulting from autophagic degradation. The release of autophagic amino acids allows the maintenance of protein synthesis and viability during nitrogen starvation. Autophagy is required for proper vegetative growth, asexual/sexual reproduction, and full virulence. Autophagy is particularly involved in the biosynthesis of deoxynivalenol (DON), an important virulence determinant. The protein is Autophagy-related protein 22 of Gibberella zeae (strain ATCC MYA-4620 / CBS 123657 / FGSC 9075 / NRRL 31084 / PH-1) (Wheat head blight fungus).